The following is a 135-amino-acid chain: Probable histone H2A.8 (135 aa).

It belongs to the histone H2A family. As to quaternary structure, the nucleosome is a histone octamer containing two molecules each of H2A, H2B, H3 and H4 assembled in one H3-H4 heterotetramer and two H2A-H2B heterodimers. The octamer wraps approximately 147 bp of DNA.

The protein localises to the nucleus. The protein resides in the chromosome. In terms of biological role, core component of nucleosome. Nucleosomes wrap and compact DNA into chromatin, limiting DNA accessibility to the cellular machineries which require DNA as a template. Histones thereby play a central role in transcription regulation, DNA repair, DNA replication and chromosomal stability. DNA accessibility is regulated via a complex set of post-translational modifications of histones, also called histone code, and nucleosome remodeling. The protein is Probable histone H2A.8 of Oryza sativa subsp. indica (Rice).